The sequence spans 179 residues: Alkyl hydroperoxide reductase AhpD (179 aa).

Cys-130 functions as the Proton donor in the catalytic mechanism. Cys-130 and Cys-133 are oxidised to a cystine. The active-site Cysteine sulfenic acid (-SOH) intermediate is the Cys-133.

The protein belongs to the AhpD family. Homotrimer.

It catalyses the reaction N(6)-[(R)-dihydrolipoyl]-L-lysyl-[lipoyl-carrier protein] + a hydroperoxide = N(6)-[(R)-lipoyl]-L-lysyl-[lipoyl-carrier protein] + an alcohol + H2O. Antioxidant protein with alkyl hydroperoxidase activity. Required for the reduction of the AhpC active site cysteine residues and for the regeneration of the AhpC enzyme activity. This chain is Alkyl hydroperoxide reductase AhpD, found in Rhodococcus erythropolis (strain PR4 / NBRC 100887).